Reading from the N-terminus, the 53-residue chain is UPF0391 membrane protein azo1750 (53 aa).

Helical transmembrane passes span 6–26 (VIFL…IAAG) and 30–50 (IAKI…VLGM).

This sequence belongs to the UPF0391 family.

The protein localises to the cell membrane. This chain is UPF0391 membrane protein azo1750, found in Azoarcus sp. (strain BH72).